The chain runs to 501 residues: Acetylcholine receptor subunit beta (501 aa).

The signal sequence occupies residues 1–23; that stretch reads MALGALLLILGILGTPLAPGARG. Topologically, residues 24–244 are extracellular; it reads SEAEGQLLKK…VIFYLIIRRK (221 aa). Residues C151 and C165 are joined by a disulfide bond. Residue N164 is glycosylated (N-linked (GlcNAc...) asparagine). Transmembrane regions (helical) follow at residues 245–269, 277–295, and 311–332; these read PLFY…VFYL, MGLS…LLLA, and YLMF…VLNL. The Cytoplasmic segment spans residues 333–469; that stretch reads HHRSPHTHQM…WQFVAMVVDR (137 aa). Residues 362 to 381 are disordered; it reads RPKPERDQLPEPHHSFSPRS. A compositionally biased stretch (basic and acidic residues) spans 363 to 375; the sequence is PKPERDQLPEPHH. Y390 bears the Phosphotyrosine; by Tyr-kinases mark. Residues 470–488 form a helical membrane-spanning segment; it reads LFLWTFIVFTSVGTLVIFL.

The protein belongs to the ligand-gated ion channel (TC 1.A.9) family. Acetylcholine receptor (TC 1.A.9.1) subfamily. Beta-1/CHRNB1 sub-subfamily. Pentamer of two alpha chains, and one each of the beta, delta, and gamma (in immature muscle) or epsilon (in mature muscle) chains. The muscle heteropentamer composed of alpha-1, beta-1, delta, epsilon subunits interacts with the alpha-conotoxin ImII.

It localises to the postsynaptic cell membrane. The protein localises to the cell membrane. The catalysed reaction is K(+)(in) = K(+)(out). It carries out the reaction Na(+)(in) = Na(+)(out). Functionally, after binding acetylcholine, the AChR responds by an extensive change in conformation that affects all subunits and leads to opening of an ion-conducting channel across the plasma membrane. This is Acetylcholine receptor subunit beta (Chrnb1) from Rattus norvegicus (Rat).